Reading from the N-terminus, the 200-residue chain is Holliday junction branch migration complex subunit RuvA (200 aa).

A domain I region spans residues 1–65 (MYEYIKGTLT…ETEHVLYGFS (65 aa)). The segment at 66 to 144 (SRAEKECFRL…TLMPLYLEEP (79 aa)) is domain II. A flexible linker region spans residues 145–149 (VVPSS). Residues 150–200 (TANSSFKEGIGALMNLGFSRLAADRMMTEAVKELSEEASVAELLPIALRKS) are domain III.

This sequence belongs to the RuvA family. Homotetramer. Forms an RuvA(8)-RuvB(12)-Holliday junction (HJ) complex. HJ DNA is sandwiched between 2 RuvA tetramers; dsDNA enters through RuvA and exits via RuvB. An RuvB hexamer assembles on each DNA strand where it exits the tetramer. Each RuvB hexamer is contacted by two RuvA subunits (via domain III) on 2 adjacent RuvB subunits; this complex drives branch migration. In the full resolvosome a probable DNA-RuvA(4)-RuvB(12)-RuvC(2) complex forms which resolves the HJ.

The protein localises to the cytoplasm. The RuvA-RuvB-RuvC complex processes Holliday junction (HJ) DNA during genetic recombination and DNA repair, while the RuvA-RuvB complex plays an important role in the rescue of blocked DNA replication forks via replication fork reversal (RFR). RuvA specifically binds to HJ cruciform DNA, conferring on it an open structure. The RuvB hexamer acts as an ATP-dependent pump, pulling dsDNA into and through the RuvAB complex. HJ branch migration allows RuvC to scan DNA until it finds its consensus sequence, where it cleaves and resolves the cruciform DNA. In Chlamydia trachomatis serovar A (strain ATCC VR-571B / DSM 19440 / HAR-13), this protein is Holliday junction branch migration complex subunit RuvA.